Consider the following 345-residue polypeptide: Dihydroorotase (345 aa).

2 residues coordinate Zn(2+): histidine 14 and histidine 16. Residues 16–18 (HLR) and asparagine 42 contribute to the substrate site. Residues lysine 100, histidine 137, and histidine 175 each coordinate Zn(2+). Lysine 100 bears the N6-carboxylysine mark. Residue histidine 137 coordinates substrate. Leucine 220 contributes to the substrate binding site. Zn(2+) is bound at residue aspartate 248. Residue aspartate 248 is part of the active site. Substrate-binding residues include histidine 252 and alanine 264.

This sequence belongs to the metallo-dependent hydrolases superfamily. DHOase family. Class II DHOase subfamily. As to quaternary structure, homodimer. Requires Zn(2+) as cofactor.

The enzyme catalyses (S)-dihydroorotate + H2O = N-carbamoyl-L-aspartate + H(+). It participates in pyrimidine metabolism; UMP biosynthesis via de novo pathway; (S)-dihydroorotate from bicarbonate: step 3/3. Catalyzes the reversible cyclization of carbamoyl aspartate to dihydroorotate. The polypeptide is Dihydroorotase (Nitrosococcus oceani (strain ATCC 19707 / BCRC 17464 / JCM 30415 / NCIMB 11848 / C-107)).